We begin with the raw amino-acid sequence, 182 residues long: Hypoxanthine/guanine phosphoribosyltransferase (182 aa).

This sequence belongs to the purine/pyrimidine phosphoribosyltransferase family. Archaeal HPRT subfamily. As to quaternary structure, homodimer.

It localises to the cytoplasm. It carries out the reaction IMP + diphosphate = hypoxanthine + 5-phospho-alpha-D-ribose 1-diphosphate. It catalyses the reaction GMP + diphosphate = guanine + 5-phospho-alpha-D-ribose 1-diphosphate. The protein operates within purine metabolism; IMP biosynthesis via salvage pathway; IMP from hypoxanthine: step 1/1. In terms of biological role, catalyzes a salvage reaction resulting in the formation of IMP that is energically less costly than de novo synthesis. The chain is Hypoxanthine/guanine phosphoribosyltransferase from Methanospirillum hungatei JF-1 (strain ATCC 27890 / DSM 864 / NBRC 100397 / JF-1).